The sequence spans 164 residues: Ecotin (164 aa).

The N-terminal stretch at 1-20 (MKMFVPAVVFAALASASAWA) is a signal peptide. A disulfide bridge links cysteine 72 with cysteine 109.

Belongs to the protease inhibitor I11 (ecotin) family. As to quaternary structure, homodimer.

Its subcellular location is the periplasm. General inhibitor of pancreatic serine proteases: inhibits chymotrypsin, trypsin, elastases, factor X, kallikrein as well as a variety of other proteases. The sequence is that of Ecotin from Salmonella enteritidis PT4 (strain P125109).